Reading from the N-terminus, the 565-residue chain is NAD-dependent malic enzyme (565 aa).

Tyrosine 104 (proton donor) is an active-site residue. Arginine 157 is an NAD(+) binding site. Lysine 175 functions as the Proton acceptor in the catalytic mechanism. 3 residues coordinate a divalent metal cation: glutamate 246, aspartate 247, and aspartate 270. 2 residues coordinate NAD(+): aspartate 270 and asparagine 418.

This sequence belongs to the malic enzymes family. As to quaternary structure, homotetramer. The cofactor is Mg(2+). Mn(2+) is required as a cofactor.

The enzyme catalyses (S)-malate + NAD(+) = pyruvate + CO2 + NADH. It carries out the reaction oxaloacetate + H(+) = pyruvate + CO2. The protein is NAD-dependent malic enzyme of Serratia proteamaculans (strain 568).